Here is a 479-residue protein sequence, read N- to C-terminus: Cell division protein FtsA (479 aa).

The disordered stretch occupies residues 417-458; the sequence is QGRQTERKENEQRDNTDRQREDTPKQTVKKKEKTGPSFGDKL. The segment covering 420–440 has biased composition (basic and acidic residues); the sequence is QTERKENEQRDNTDRQREDTP.

The protein belongs to the FtsA/MreB family. In terms of assembly, self-interacts. Interacts with FtsZ.

Its subcellular location is the cell inner membrane. In terms of biological role, cell division protein that is involved in the assembly of the Z ring. May serve as a membrane anchor for the Z ring. In Porphyromonas gingivalis (strain ATCC BAA-308 / W83), this protein is Cell division protein FtsA.